Consider the following 199-residue polypeptide: LIM domain-containing protein E (199 aa).

The 61-residue stretch at Val5–Thr65 folds into the LIM zinc-binding domain. Residues Tyr134 to Gln199 form a disordered region. Composition is skewed to low complexity over residues Glu146–Glu155 and Glu163–Tyr174. Residues Gln175–Gln199 are compositionally biased toward acidic residues.

As to quaternary structure, may interact with rac1A.

It is found in the cytoplasm. The protein localises to the cell cortex. Its subcellular location is the nucleus. The protein resides in the cell projection. It localises to the lamellipodium. It is found in the filopodium. The protein localises to the cytoskeleton. Functionally, associates with the actin cytoskeleton and may regulate actin polymerization in lamellipodia, through a rac1-dependent signaling pathway. May play a role in cell motility. Involved in cytokinesis by regulating the microtubule system and linking it to the cortical actin network. The polypeptide is LIM domain-containing protein E (limE) (Dictyostelium discoideum (Social amoeba)).